Reading from the N-terminus, the 640-residue chain is Spindle assembly abnormal protein 6 homolog (640 aa).

Residues 40–92 enclose the PISA domain; the sequence is VHKKDLAVRLTDDADPFFLYNLVISEEDFQSLKSQQGLLVDFSAFPQKFIDLL. Residues 154–475 are a coiled coil; it reads LARCLKCLKE…KQLLKTNENV (322 aa).

Nine homodimers form a cartwheel structure with an internal diameter of 23 nM and radial spokes connecting to the microtubule triplets.

The protein resides in the cytoplasm. It localises to the cytoskeleton. Its subcellular location is the microtubule organizing center. It is found in the centrosome. Functionally, central scaffolding component of the centrioles ensuring their 9-fold symmetry. Required for centrosome biogenesis and duplication: required both for mother-centriole-dependent centriole duplication and deuterosome-dependent centriole amplification in multiciliated cells. This is Spindle assembly abnormal protein 6 homolog (SASS6) from Gallus gallus (Chicken).